The chain runs to 372 residues: Spermidine/putrescine import ATP-binding protein PotA (372 aa).

An ABC transporter domain is found at 12–242; sequence IQLKGLNKSF…PTNLFVARFI (231 aa). 44-51 is an ATP binding site; sequence GPSGCGKT.

Belongs to the ABC transporter superfamily. Spermidine/putrescine importer (TC 3.A.1.11.1) family. In terms of assembly, the complex is composed of two ATP-binding proteins (PotA), two transmembrane proteins (PotB and PotC) and a solute-binding protein (PotD).

Its subcellular location is the cell inner membrane. It carries out the reaction ATP + H2O + polyamine-[polyamine-binding protein]Side 1 = ADP + phosphate + polyamineSide 2 + [polyamine-binding protein]Side 1.. Functionally, part of the ABC transporter complex PotABCD involved in spermidine/putrescine import. Responsible for energy coupling to the transport system. This is Spermidine/putrescine import ATP-binding protein PotA from Photobacterium profundum (strain SS9).